We begin with the raw amino-acid sequence, 147 residues long: 2-amino-4-hydroxy-6-hydroxymethyldihydropteridine pyrophosphokinase (147 aa).

It belongs to the HPPK family.

It catalyses the reaction 6-hydroxymethyl-7,8-dihydropterin + ATP = (7,8-dihydropterin-6-yl)methyl diphosphate + AMP + H(+). Its pathway is cofactor biosynthesis; tetrahydrofolate biosynthesis; 2-amino-4-hydroxy-6-hydroxymethyl-7,8-dihydropteridine diphosphate from 7,8-dihydroneopterin triphosphate: step 4/4. Catalyzes the transfer of pyrophosphate from adenosine triphosphate (ATP) to 6-hydroxymethyl-7,8-dihydropterin, an enzymatic step in folate biosynthesis pathway. The chain is 2-amino-4-hydroxy-6-hydroxymethyldihydropteridine pyrophosphokinase (folK) from Porphyromonas gingivalis (strain ATCC 33277 / DSM 20709 / CIP 103683 / JCM 12257 / NCTC 11834 / 2561).